The following is a 208-amino-acid chain: Small ribosomal subunit protein uS4 (208 aa).

The S4 RNA-binding domain maps to 98–161 (RRLDNVIYRL…RKIPVIAEAQ (64 aa)).

It belongs to the universal ribosomal protein uS4 family. As to quaternary structure, part of the 30S ribosomal subunit. Contacts protein S5. The interaction surface between S4 and S5 is involved in control of translational fidelity.

In terms of biological role, one of the primary rRNA binding proteins, it binds directly to 16S rRNA where it nucleates assembly of the body of the 30S subunit. Functionally, with S5 and S12 plays an important role in translational accuracy. The protein is Small ribosomal subunit protein uS4 of Nitratidesulfovibrio vulgaris (strain DSM 19637 / Miyazaki F) (Desulfovibrio vulgaris).